We begin with the raw amino-acid sequence, 147 residues long: Leech anti-platelet protein (147 aa).

The signal sequence occupies residues 1-21 (MNSFLFSLACSLLVAIPAISA). Residues 21–71 (AQDEDAGGAGDETSEGEDTTGSDETPSTGGGGDGGNEETITAGNEDCWSKR) are disordered. The span at 22–41 (QDEDAGGAGDETSEGEDTTG) shows a compositional bias: acidic residues. 3 disulfide bridges follow: Cys67/Cys145, Cys92/Cys117, and Cys96/Cys105.

In terms of processing, the N-terminus is blocked. In terms of tissue distribution, expressed by salivary glands.

It localises to the secreted. Inhibits collagen-stimulated platelet aggregation (IC(50)=60 nM), dense granule release and serotonin release. Does not inhibit platelet aggregation induced by ADP, arachidonic acid, and thrombin. This is Leech anti-platelet protein from Haementeria officinalis (Mexican leech).